Here is a 376-residue protein sequence, read N- to C-terminus: Chaperone protein DnaJ (376 aa).

The 66-residue stretch at aspartate 5 to glycine 70 folds into the J domain. The segment at glycine 137–serine 215 adopts a CR-type zinc-finger fold. Zn(2+) contacts are provided by cysteine 150, cysteine 153, cysteine 167, cysteine 170, cysteine 189, cysteine 192, cysteine 203, and cysteine 206. CXXCXGXG motif repeat units lie at residues cysteine 150–glycine 157, cysteine 167–glycine 174, cysteine 189–glycine 196, and cysteine 203–glycine 210.

This sequence belongs to the DnaJ family. Homodimer. Zn(2+) is required as a cofactor.

Its subcellular location is the cytoplasm. In terms of biological role, participates actively in the response to hyperosmotic and heat shock by preventing the aggregation of stress-denatured proteins and by disaggregating proteins, also in an autonomous, DnaK-independent fashion. Unfolded proteins bind initially to DnaJ; upon interaction with the DnaJ-bound protein, DnaK hydrolyzes its bound ATP, resulting in the formation of a stable complex. GrpE releases ADP from DnaK; ATP binding to DnaK triggers the release of the substrate protein, thus completing the reaction cycle. Several rounds of ATP-dependent interactions between DnaJ, DnaK and GrpE are required for fully efficient folding. Also involved, together with DnaK and GrpE, in the DNA replication of plasmids through activation of initiation proteins. In Pelagibacter ubique (strain HTCC1062), this protein is Chaperone protein DnaJ.